Reading from the N-terminus, the 393-residue chain is Cysteine desulfurase (393 aa).

Pyridoxal 5'-phosphate contacts are provided by residues Gly76 to Thr77, Asn155, Gln183, and Ser203 to His205. An N6-(pyridoxal phosphate)lysine modification is found at Lys206. Position 241 (Thr241) interacts with pyridoxal 5'-phosphate. The Cysteine persulfide intermediate role is filled by Cys328. A [2Fe-2S] cluster-binding site is contributed by Cys328.

Belongs to the class-V pyridoxal-phosphate-dependent aminotransferase family. NifS/IscS subfamily. In terms of assembly, homodimer. Pyridoxal 5'-phosphate serves as cofactor.

The catalysed reaction is (sulfur carrier)-H + L-cysteine = (sulfur carrier)-SH + L-alanine. Functionally, catalyzes the removal of elemental sulfur atoms from cysteine to produce alanine. Seems to participate in the biosynthesis of the nitrogenase metalloclusters by providing the inorganic sulfur required for the Fe-S core formation. This Bradyrhizobium diazoefficiens (strain JCM 10833 / BCRC 13528 / IAM 13628 / NBRC 14792 / USDA 110) protein is Cysteine desulfurase.